A 473-amino-acid polypeptide reads, in one-letter code: Reticulon-4 receptor (473 aa).

A signal peptide spans 1–26 (MKRASSGGSRLLAWVLWLQAWRVATP). 2 cysteine pairs are disulfide-bonded: C27-C33 and C31-C43. Positions 27 to 57 (CPGACVCYNEPKVTTSCPQQGLQAVPTGIPA) constitute an LRRNT domain. LRR repeat units follow at residues 58-79 (SSQRIFLHGNRISHVPAASFQS), 82-103 (NLTILWLHSNALARIDAAAFTG), 106-128 (LLEQLDLSDNAQLHVVDPTTFHG), 131-152 (HLHTLHLDRCGLRELGPGLFRG), 155-176 (ALQYLYLQDNNLQALPDNTFRD), 179-200 (NLTHLFLHGNRIPSVPEHAFRG), 203-224 (SLDRLLLHQNHVARVHPHAFRD), and 227-248 (RLMTLYLFANNLSMLPAEVLMP). The N-linked (GlcNAc...) asparagine glycan is linked to N82. An N-linked (GlcNAc...) asparagine glycan is attached at N179. Residues 260–311 (NPWVCDCRARPLWAWLQKFRGSSSEVPCNLPQRLADRDLKRLAASDLEGCAV) form the LRRCT domain. 3 disulfides stabilise this stretch: C264/C287, C266/C335, and C309/C336. The interval 346 to 446 (VLEPGRPASA…GASGTGDAEG (101 aa)) is disordered. An N-linked (GlcNAc...) asparagine glycan is attached at N372. Basic residues predominate over residues 413–429 (PRRRPGCSRKNRTRSHC). The segment covering 434 to 445 (AGSGASGTGDAE) has biased composition (gly residues). S447 carries the GPI-anchor amidated serine lipid modification. A propeptide spans 448–473 (GALPALACSLAPLGLALVLWTVLGPC) (removed in mature form).

This sequence belongs to the Nogo receptor family. Homodimer. Interacts with MAG. Interacts with RTN4. Interacts with NGFR. Interacts with LINGO1. Interacts with KIAA0319L. Interacts with OLFM1; this inhibits interaction with LINGO1 and NGFR. Interacts with OMG. N-glycosylated. O-glycosylated. Contains terminal sialic acid groups on its glycan chains. Detected in embryonic hippocampus neurons. Detected in brain (at protein level). Detected in neurons in the neocortex, in hippocampus, dorsal thalamus, cerebellum granule cell layer and the mitral cell layer in the olfactory bulb. Detected in brain, dorsal root ganglion and heart.

Its subcellular location is the cell membrane. The protein resides in the membrane raft. The protein localises to the cell projection. It localises to the dendrite. It is found in the axon. Its subcellular location is the perikaryon. Receptor for RTN4, OMG and MAG. Functions as a receptor for the sialylated gangliosides GT1b and GM1. Besides, functions as a receptor for chondroitin sulfate proteoglycans. Can also bind heparin. Intracellular signaling cascades are triggered via the coreceptor NGFR. Signaling mediates activation of Rho and downstream reorganization of the actin cytoskeleton. Mediates axonal growth inhibition. Mediates axonal growth inhibition and plays a role in regulating axon regeneration and neuronal plasticity in the adult central nervous system. Plays a role in postnatal brain development. Required for normal axon migration across the brain midline and normal formation of the corpus callosum. Protects motoneurons against apoptosis; protection against apoptosis is probably mediated via interaction with MAG. Acts in conjunction with RTN4 and LINGO1 in regulating neuronal precursor cell motility during cortical development. Like other family members, plays a role in restricting the number dendritic spines and the number of synapses that are formed during brain development. In Mus musculus (Mouse), this protein is Reticulon-4 receptor (Rtn4r).